We begin with the raw amino-acid sequence, 231 residues long: Potassium/proton antiporter CemA (231 aa).

The next 4 membrane-spanning stretches (helical) occupy residues 7–27, 116–136, 156–176, and 191–211; these read FISL…SLSF, IISF…LIFL, ILLL…ELMI, and IISG…KYWI.

The protein belongs to the CemA family.

It localises to the plastid. The protein localises to the chloroplast inner membrane. The catalysed reaction is K(+)(in) + H(+)(out) = K(+)(out) + H(+)(in). Functionally, contributes to K(+)/H(+) antiport activity by supporting proton efflux to control proton extrusion and homeostasis in chloroplasts in a light-dependent manner to modulate photosynthesis. Prevents excessive induction of non-photochemical quenching (NPQ) under continuous-light conditions. Indirectly promotes efficient inorganic carbon uptake into chloroplasts. This Morus indica (Mulberry) protein is Potassium/proton antiporter CemA.